A 943-amino-acid chain; its full sequence is Isoleucine--tRNA ligase (943 aa).

The 'HIGH' region motif lies at 58–68 (PYANGSIHIGH). Glu567 lines the L-isoleucyl-5'-AMP pocket. Positions 608–612 (KMSKS) match the 'KMSKS' region motif. Lys611 provides a ligand contact to ATP. Zn(2+)-binding residues include Cys906, Cys909, Cys926, and Cys929.

It belongs to the class-I aminoacyl-tRNA synthetase family. IleS type 1 subfamily. As to quaternary structure, monomer. Zn(2+) serves as cofactor.

It is found in the cytoplasm. The catalysed reaction is tRNA(Ile) + L-isoleucine + ATP = L-isoleucyl-tRNA(Ile) + AMP + diphosphate. In terms of biological role, catalyzes the attachment of isoleucine to tRNA(Ile). As IleRS can inadvertently accommodate and process structurally similar amino acids such as valine, to avoid such errors it has two additional distinct tRNA(Ile)-dependent editing activities. One activity is designated as 'pretransfer' editing and involves the hydrolysis of activated Val-AMP. The other activity is designated 'posttransfer' editing and involves deacylation of mischarged Val-tRNA(Ile). In Ectopseudomonas mendocina (strain ymp) (Pseudomonas mendocina), this protein is Isoleucine--tRNA ligase.